Consider the following 193-residue polypeptide: Potassium-transporting ATPase KdpC subunit (193 aa).

The helical transmembrane segment at 7–27 threads the bilayer; sequence PLVVLFVVLTAVTGLAYPAVM.

Belongs to the KdpC family. In terms of assembly, the system is composed of three essential subunits: KdpA, KdpB and KdpC.

The protein resides in the cell inner membrane. Its function is as follows. Part of the high-affinity ATP-driven potassium transport (or Kdp) system, which catalyzes the hydrolysis of ATP coupled with the electrogenic transport of potassium into the cytoplasm. This subunit acts as a catalytic chaperone that increases the ATP-binding affinity of the ATP-hydrolyzing subunit KdpB by the formation of a transient KdpB/KdpC/ATP ternary complex. The polypeptide is Potassium-transporting ATPase KdpC subunit (Burkholderia orbicola (strain MC0-3)).